Here is a 773-residue protein sequence, read N- to C-terminus: C-Maf-inducing protein (773 aa).

Residues 1–30 (MDVTSSSGGGGDPRQIEETKPLLGGDVSAP) are disordered. Positions 54–163 (LLQEGDIQVC…HSLQWKKKIY (110 aa)) constitute a PH domain. Phosphoserine occurs at positions 349, 377, 382, and 660. LRR repeat units follow at residues 663 to 686 (NLENLSLAFTNVTSACAEHLIKLP), 687 to 707 (SLKQLNLWSTQFGDAGLRLLS), 712 to 732 (MLQVLNLCETPVTDAGLLALS), and 736 to 756 (SLCSLNMNSTKLSADTYEDLK).

As to quaternary structure, interacts with FLNA. In terms of tissue distribution, isoform 1 is expressed in peripheral blood mononuclear cells and kidney. Lower expression in brain and liver. Expression is down-regulated in activated cells. Isoform 2 is expressed in lymphocyte precursors, however, expression shuts down during maturation and differentiation in thymus and fetal liver.

It localises to the nucleus. Its subcellular location is the cytoplasm. Its function is as follows. Plays a role in T-cell signaling pathway. Isoform 2 may play a role in T-helper 2 (Th2) signaling pathway and seems to represent the first proximal signaling protein that links T-cell receptor-mediated signal to the activation of c-Maf Th2 specific factor. In Homo sapiens (Human), this protein is C-Maf-inducing protein (CMIP).